The sequence spans 378 residues: Ecotin-like protein 3 (378 aa).

Disordered stretches follow at residues 191–216 (HRLSSSTPPLIPSAVRGSAHEAHAAP) and 238–378 (PQNN…KADP). A compositionally biased stretch (polar residues) spans 274–287 (NEPSPSRPRLSSTE). Positions 337–348 (RKAEDNVYEKTM) are enriched in basic and acidic residues. Positions 362 to 378 (KASASSKKSGNGSKADP) are enriched in low complexity.

It belongs to the protease inhibitor I11 (ecotin) family.

The protein is Ecotin-like protein 3 of Leishmania infantum.